The chain runs to 132 residues: MEPVADRELQAKLYLERHRIMELLNQLTSFLLFARPKKPREYLISLLERLRVAKATHVAFPYFMDNSNTVSMFEMMDMAGRGCISFVQYKEALKNLGLCTADEVLNDDGHIITLDTFRDEMNKRMEKMWSMF.

2 consecutive EF-hand domains span residues 64 to 99 (MDNS…LGLC) and 120 to 132 (EMNK…WSMF).

This chain is EF-hand calcium-binding domain-containing protein 10 (Efcab10), found in Mus musculus (Mouse).